Here is a 120-residue protein sequence, read N- to C-terminus: Large ribosomal subunit protein bL21 (120 aa).

The protein belongs to the bacterial ribosomal protein bL21 family. As to quaternary structure, part of the 50S ribosomal subunit. Contacts protein L20.

Its function is as follows. This protein binds to 23S rRNA in the presence of protein L20. This chain is Large ribosomal subunit protein bL21, found in Rhizorhabdus wittichii (strain DSM 6014 / CCUG 31198 / JCM 15750 / NBRC 105917 / EY 4224 / RW1) (Sphingomonas wittichii).